The chain runs to 806 residues: ATP-dependent zinc metalloprotease FTSH 9, chloroplastic (806 aa).

The transit peptide at Met-1–Pro-62 directs the protein to the chloroplast. The tract at residues Ser-84–Gly-116 is disordered. 2 helical membrane-spanning segments follow: residues Ile-133–Val-153 and Gly-271–Leu-291. Residue Gly-369–Thr-376 coordinates ATP. Zn(2+) is bound at residue His-594. Residue Glu-595 is part of the active site. Residues His-598 and Asp-677 each contribute to the Zn(2+) site.

In the N-terminal section; belongs to the AAA ATPase family. It in the C-terminal section; belongs to the peptidase M41 family. Zn(2+) is required as a cofactor.

Its subcellular location is the plastid. The protein resides in the chloroplast thylakoid membrane. Probable ATP-dependent zinc metallopeptidase. The chain is ATP-dependent zinc metalloprotease FTSH 9, chloroplastic (FTSH9) from Arabidopsis thaliana (Mouse-ear cress).